We begin with the raw amino-acid sequence, 124 residues long: Fluoride-specific ion channel FluC (124 aa).

Transmembrane regions (helical) follow at residues 4–24, 32–52, 67–87, and 96–116; these read IVAIALFGALGCLARYLLAGW, GFPYGTLTVNVVGAFLIGLIM, IGLTIGFLGGLTTFSTFSYET, and FITAAVNVLASVLVCLACTWL. Positions 75 and 78 each coordinate Na(+).

This sequence belongs to the fluoride channel Fluc/FEX (TC 1.A.43) family.

Its subcellular location is the cell inner membrane. It carries out the reaction fluoride(in) = fluoride(out). Its activity is regulated as follows. Na(+) is not transported, but it plays an essential structural role and its presence is essential for fluoride channel function. Its function is as follows. Fluoride-specific ion channel. Important for reducing fluoride concentration in the cell, thus reducing its toxicity. This is Fluoride-specific ion channel FluC from Geobacter metallireducens (strain ATCC 53774 / DSM 7210 / GS-15).